Reading from the N-terminus, the 316-residue chain is Small ribosomal subunit biogenesis GTPase RsgA (316 aa).

Positions 1–20 are disordered; the sequence is MSKLSHQQQRRIHNHRQNKL. Basic residues predominate over residues 8-18; the sequence is QQRRIHNHRQN. A CP-type G domain is found at 92-251; sequence AGKLKPVASN…IIDTPGVRGF (160 aa). GTP-binding positions include 139 to 142 and 193 to 201; these read NKSD and GQSGVGKSS. Zn(2+) contacts are provided by cysteine 275, cysteine 280, histidine 282, and cysteine 288.

The protein belongs to the TRAFAC class YlqF/YawG GTPase family. RsgA subfamily. In terms of assembly, monomer. Associates with 30S ribosomal subunit, binds 16S rRNA. The cofactor is Zn(2+).

It localises to the cytoplasm. Its function is as follows. One of several proteins that assist in the late maturation steps of the functional core of the 30S ribosomal subunit. Helps release RbfA from mature subunits. May play a role in the assembly of ribosomal proteins into the subunit. Circularly permuted GTPase that catalyzes slow GTP hydrolysis, GTPase activity is stimulated by the 30S ribosomal subunit. This Dichelobacter nodosus (strain VCS1703A) protein is Small ribosomal subunit biogenesis GTPase RsgA.